We begin with the raw amino-acid sequence, 672 residues long: Bifunctional polymyxin resistance protein ArnA (672 aa).

The formyltransferase ArnAFT stretch occupies residues 1-310; sequence MKAIVFAYHD…EMGMVPQAKL (310 aa). The active-site Proton donor; for formyltransferase activity is the histidine 104. (6R)-10-formyltetrahydrofolate contacts are provided by residues arginine 114 and 136–140; that span reads VSRAD. The tract at residues 320–672 is dehydrogenase ArnADH; that stretch reads RRTRVLILGV…HADNVTDTQG (353 aa). Residues aspartate 353 and 374–375 each bind NAD(+); that span reads DI. UDP-alpha-D-glucuronate contacts are provided by residues alanine 399, tyrosine 404, and 438 to 439; that span reads TS. Glutamate 440 serves as the catalytic Proton acceptor; for decarboxylase activity. Residues arginine 466, asparagine 498, 532–541, and tyrosine 619 contribute to the UDP-alpha-D-glucuronate site; that span reads KLVDGGAQKR. The Proton donor; for decarboxylase activity role is filled by arginine 625.

In the N-terminal section; belongs to the Fmt family. UDP-L-Ara4N formyltransferase subfamily. It in the C-terminal section; belongs to the NAD(P)-dependent epimerase/dehydratase family. UDP-glucuronic acid decarboxylase subfamily. Homohexamer, formed by a dimer of trimers.

It carries out the reaction UDP-alpha-D-glucuronate + NAD(+) = UDP-beta-L-threo-pentopyranos-4-ulose + CO2 + NADH. The catalysed reaction is UDP-4-amino-4-deoxy-beta-L-arabinose + (6R)-10-formyltetrahydrofolate = UDP-4-deoxy-4-formamido-beta-L-arabinose + (6S)-5,6,7,8-tetrahydrofolate + H(+). The protein operates within nucleotide-sugar biosynthesis; UDP-4-deoxy-4-formamido-beta-L-arabinose biosynthesis; UDP-4-deoxy-4-formamido-beta-L-arabinose from UDP-alpha-D-glucuronate: step 1/3. It participates in nucleotide-sugar biosynthesis; UDP-4-deoxy-4-formamido-beta-L-arabinose biosynthesis; UDP-4-deoxy-4-formamido-beta-L-arabinose from UDP-alpha-D-glucuronate: step 3/3. It functions in the pathway bacterial outer membrane biogenesis; lipopolysaccharide biosynthesis. Bifunctional enzyme that catalyzes the oxidative decarboxylation of UDP-glucuronic acid (UDP-GlcUA) to UDP-4-keto-arabinose (UDP-Ara4O) and the addition of a formyl group to UDP-4-amino-4-deoxy-L-arabinose (UDP-L-Ara4N) to form UDP-L-4-formamido-arabinose (UDP-L-Ara4FN). The modified arabinose is attached to lipid A and is required for resistance to polymyxin and cationic antimicrobial peptides. The polypeptide is Bifunctional polymyxin resistance protein ArnA (Pectobacterium carotovorum subsp. carotovorum (strain PC1)).